A 461-amino-acid polypeptide reads, in one-letter code: NADH-ubiquinone oxidoreductase chain 4 (461 aa).

A run of 13 helical transmembrane segments spans residues 20 to 42 (PAWLWPTMTTNSLLVATISLTWL), 61 to 81 (PLSTPLLILTCWLLPLMILAS), 93 to 113 (QRSFISLLISLQTFLIMAFGA), 114 to 134 (TEIILFYIMFEATLIPTLIII), 147 to 167 (GTYFLFYTVMGSLPLLVALLM), 197 to 217 (WTACLLAFLVKMPLYGVHLWL), 225 to 245 (PIAGSMVLAAVLLKLGGYGMM), 258 to 278 (LAYPFIILALWGIIMTGSICL), 285 to 304 (SLIAYSSVGHMGLVAAGILT), 309 to 331 (GFTGATVLMIAHGLTSSALFCLA), 351 to 371 (VILPLMTFWWLMMNLANLALP), 393 to 413 (TLTMTGLGMLITAIYSLHMFL), and 436 to 456 (LLMTMHALPMLLLILKPELIW).

It belongs to the complex I subunit 4 family.

It is found in the mitochondrion membrane. The catalysed reaction is a ubiquinone + NADH + 5 H(+)(in) = a ubiquinol + NAD(+) + 4 H(+)(out). Core subunit of the mitochondrial membrane respiratory chain NADH dehydrogenase (Complex I) that is believed to belong to the minimal assembly required for catalysis. Complex I functions in the transfer of electrons from NADH to the respiratory chain. The immediate electron acceptor for the enzyme is believed to be ubiquinone. The sequence is that of NADH-ubiquinone oxidoreductase chain 4 (MT-ND4) from Latimeria chalumnae (Coelacanth).